Here is a 436-residue protein sequence, read N- to C-terminus: 3-ketoacyl-CoA thiolase (436 aa).

Cysteine 99 functions as the Acyl-thioester intermediate in the catalytic mechanism. Residues histidine 392 and cysteine 422 each act as proton acceptor in the active site.

The protein belongs to the thiolase-like superfamily. Thiolase family. In terms of assembly, heterotetramer of two alpha chains (FadJ) and two beta chains (FadI).

The protein localises to the cytoplasm. The enzyme catalyses an acyl-CoA + acetyl-CoA = a 3-oxoacyl-CoA + CoA. It participates in lipid metabolism; fatty acid beta-oxidation. Its function is as follows. Catalyzes the final step of fatty acid oxidation in which acetyl-CoA is released and the CoA ester of a fatty acid two carbons shorter is formed. The polypeptide is 3-ketoacyl-CoA thiolase (Salmonella newport (strain SL254)).